A 462-amino-acid polypeptide reads, in one-letter code: beta-Tubulin at 65B (462 aa).

Glu-70, Ser-137, Gly-141, Thr-142, Gly-143, Asn-203, and Asn-225 together coordinate GTP. Position 70 (Glu-70) interacts with Mg(2+). Residues 420–462 (DYRSSAEGEDSGGGGGGGGGRSGSAESGEEEATPEAHCQYCTE) form a disordered region. The segment covering 430–441 (SGGGGGGGGGRS) has biased composition (gly residues).

The protein belongs to the tubulin family. Dimer of alpha and beta chains. A typical microtubule is a hollow water-filled tube with an outer diameter of 25 nm and an inner diameter of 15 nM. Alpha-beta heterodimers associate head-to-tail to form protofilaments running lengthwise along the microtubule wall with the beta-tubulin subunit facing the microtubule plus end conferring a structural polarity. Microtubules usually have 13 protofilaments but different protofilament numbers can be found in some organisms and specialized cells. The cofactor is Mg(2+).

The protein localises to the cytoplasm. The protein resides in the cytoskeleton. Tubulin is the major constituent of microtubules, a cylinder consisting of laterally associated linear protofilaments composed of alpha- and beta-tubulin heterodimers. Microtubules grow by the addition of GTP-tubulin dimers to the microtubule end, where a stabilizing cap forms. Below the cap, tubulin dimers are in GDP-bound state, owing to GTPase activity of alpha-tubulin. This chain is beta-Tubulin at 65B, found in Drosophila melanogaster (Fruit fly).